The following is an 801-amino-acid chain: Ferredoxin:CoB-CoM heterodisulfide reductase subunit A (801 aa).

149-172 contacts FAD; the sequence is GGGIAGITAALNLADNGVSTVLVE. 2 4Fe-4S ferredoxin-type domains span residues 239–269 and 285–320; these read KKPR…FNCG and PKIY…FSQK. Positions 248, 251, 254, 258, 295, 303, 306, and 310 each coordinate [4Fe-4S] cluster. The segment at 382–409 is disordered; sequence FSKASSDPTPATCDSRCEDSSDESQGTD. 2 consecutive 4Fe-4S ferredoxin-type domains span residues 606 to 634 and 635 to 664; these read EIAT…VNES and GRVV…IAGF. [4Fe-4S] cluster is bound by residues Cys-615, Cys-618, Cys-621, Cys-624, Cys-644, Cys-647, Cys-650, and Cys-654.

This sequence belongs to the HdrA family. As to quaternary structure, the ferredoxin:CoB-CoM heterodisulfide reductase is composed of three subunits; HdrA1, HdrB1 and HdrC1. [4Fe-4S] cluster serves as cofactor. Requires FAD as cofactor.

Its subcellular location is the cytoplasm. The enzyme catalyses coenzyme B + coenzyme M + 2 oxidized [2Fe-2S]-[ferredoxin] = coenzyme M-coenzyme B heterodisulfide + 2 reduced [2Fe-2S]-[ferredoxin] + 2 H(+). It functions in the pathway cofactor metabolism; coenzyme M-coenzyme B heterodisulfide reduction; coenzyme B and coenzyme M from coenzyme M-coenzyme B heterodisulfide: step 1/1. Functionally, part of a complex that catalyzes the reversible reduction of CoM-S-S-CoB to the thiol-coenzymes H-S-CoM (coenzyme M) and H-S-CoB (coenzyme B). Probably involved in methylotrophic methanogenesis but not in aceticlastic methanogenesis. This Methanosarcina acetivorans (strain ATCC 35395 / DSM 2834 / JCM 12185 / C2A) protein is Ferredoxin:CoB-CoM heterodisulfide reductase subunit A.